Reading from the N-terminus, the 282-residue chain is MVVEVEGFYGVYLLFCTNPKYKGRIYIGFTVNPERRIQQHNGGKHKGGAWKTSGRGPWDMVLIVHGFPNDIAALRFEWAWQHPHVSRRLTHVPRKTKKQSSFDFHLLVLCHMLRVAPWNRLPLTLRWLRQEYRRELPLLLQPPLHMPLAFGQVRARPIPKGEKEKGRLGENRAEETEQEVILLGDAVVQRCRVCYERVQDKDDSLHCFHPGCTLTAHIMCLAKLFLLNEPQNLIPVEGLCPSCGHSLLWGDLIRHRNGCYGDLEEISSSQAHWGDELHRCSD.

The region spanning 7 to 97 is the GIY-YIG domain; the sequence is GFYGVYLLFC…RLTHVPRKTK (91 aa). The SLX1-type zinc finger occupies 191–243; that stretch reads CRVCYERVQDKDDSLHCFHPGCTLTAHIMCLAKLFLLNEPQNLIPVEGLCPSC.

Belongs to the SLX1 family. In terms of assembly, forms a heterodimer with slx4. A divalent metal cation serves as cofactor.

The protein localises to the nucleus. In terms of biological role, catalytic subunit of the slx1-slx4 structure-specific endonuclease that resolves DNA secondary structures generated during DNA repair and recombination. Has endonuclease activity towards branched DNA substrates, introducing single-strand cuts in duplex DNA close to junctions with ss-DNA. The chain is Structure-specific endonuclease subunit slx1 (slx1a) from Xenopus laevis (African clawed frog).